Here is a 751-residue protein sequence, read N- to C-terminus: NAD(P)H-quinone oxidoreductase subunit 5, chloroplastic (751 aa).

16 helical membrane passes run 9–29 (WIIP…LIIF), 40–60 (WAFP…KLSI), 89–109 (VDPL…LVLI), 125–145 (FAYL…SNFI), 147–167 (IYIF…FWFT), 185–205 (GDFG…SFEF), 219–239 (NEVH…GAVA), 258–278 (TPIS…FLVA), 280–300 (LFPL…VGII), 327–347 (LGYM…FHLI), 354–374 (ALLF…VGYS), 396–416 (TAFL…CFWS), 425–445 (WLYS…TAFY), 543–563 (LFPL…GIPF), 599–619 (FLTN…LASF), and 719–739 (ISSY…IYYF).

Belongs to the complex I subunit 5 family. As to quaternary structure, NDH is composed of at least 16 different subunits, 5 of which are encoded in the nucleus.

It is found in the plastid. The protein resides in the chloroplast thylakoid membrane. The catalysed reaction is a plastoquinone + NADH + (n+1) H(+)(in) = a plastoquinol + NAD(+) + n H(+)(out). It catalyses the reaction a plastoquinone + NADPH + (n+1) H(+)(in) = a plastoquinol + NADP(+) + n H(+)(out). NDH shuttles electrons from NAD(P)H:plastoquinone, via FMN and iron-sulfur (Fe-S) centers, to quinones in the photosynthetic chain and possibly in a chloroplast respiratory chain. The immediate electron acceptor for the enzyme in this species is believed to be plastoquinone. Couples the redox reaction to proton translocation, and thus conserves the redox energy in a proton gradient. This is NAD(P)H-quinone oxidoreductase subunit 5, chloroplastic (ndhF) from Fagopyrum esculentum subsp. ancestrale (Wild buckwheat).